The sequence spans 260 residues: Universal stress protein PHOS34 (260 aa).

The transit peptide at 1-33 (MNPDSDYPHLPNIKIHHPSSPRHSHHHSSSTPS) directs the protein to the chloroplast. Residues 1 to 42 (MNPDSDYPHLPNIKIHHPSSPRHSHHHSSSTPSAATPTPTAG) form a disordered region. Positions 14-28 (KIHHPSSPRHSHHHS) are enriched in basic residues. An ATP-binding site is contributed by Pro-18. Ser-20 bears the Phosphoserine; by MAPK3 and MAPK6 mark. Residues 29 to 41 (SSTPSAATPTPTA) are compositionally biased toward low complexity. An ATP-binding site is contributed by Val-80. Positions 92 to 118 (GPLPLQTPPPPSAATDPGAQPKPSQED) are disordered. Residues 170 to 179 (GSRGFGAEKR) and 187 to 189 (SVS) contribute to the ATP site. A disordered region spans residues 209–260 (RDGPAPPGNVGATREAIVTVKSRRDDDDDDDEDHEAKIAAAASDHHEHIKDE). Ser-230 is modified (phosphoserine). Basic and acidic residues predominate over residues 251-260 (SDHHEHIKDE).

Belongs to the universal stress protein A family. In terms of processing, phosphorylated by MAPK3 and MAPK6 after pathogenic elicitation (e.g. bacterial flg22, Phytophthora infestans zoospores and xylanase).

The protein resides in the plastid. It is found in the chloroplast. The chain is Universal stress protein PHOS34 from Arabidopsis thaliana (Mouse-ear cress).